We begin with the raw amino-acid sequence, 619 residues long: MSGLVLGQRDEPAGHRLSQEEILGSTKVVSQGLEALHSEHQAVLQSLSHTIECLQQGGHEEGLVHEKARQLRRSMENIELGLSEAQVMLALASHLSTVESEKQKLRAQVRRLCQENQWLRDELAGTQQRLQRSEQAVAQLEEEKKHLEFLRQLRQYDEDGHGMEEKEGEATKDSLDDLFPNEEEEDSGNDLSRGQGAAAAQQGGYEIPARLRTLHNLVIQYAAQGRYEVAVPLCKQALEDLERTSGRGHPDVATMLNILALVYRDQNKYKEAAHLLNDALSIRESTLGRDHPAVAATLNNLAVLYGKRGKYKEAEPLCQRALEIREKVLGTDHPDVAKQLNNLALLCQNQGKYEAVERYYQRALAIYESQLGPDNPNVARTKNNLASCYLKQGKYSEAEALYKEILTCAHVQEFGSVDDDHKPIWMHAEEREEMSRSRPRDSSAPYAEYGGWYKACRVSSPTVNTTLKNLGALYRRQGKLEAAETLEECALRSRKQGTDPISQTKVAELLGEGDGRKAIQEGPGDSVKFEGGEDASVAVEWSGDGSGTLQRSGSLGKIRDVLRRSSELLVRKLQGTEPRPSSSSMKRAASLNYLNQPNAAPLQVSRGLSASTVDLSSSS.

N-acetylserine is present on S2. A TPR 1 repeat occupies Q55–M88. Residues H65 to Q155 are a coiled coil. A compositionally biased stretch (basic and acidic residues) spans Y156 to L175. The disordered stretch occupies residues Y156–A199. Position 174 is a phosphoserine (S174). Residues F179–G188 show a composition bias toward acidic residues. TPR repeat units follow at residues L211 to T244, A253 to T286, A295 to V328, A337 to Q370, and A379 to Q412. Residue S460 is modified to Phosphoserine. The TPR 7 repeat unit spans residues N464–G497. A phosphoserine mark is found at S565, S566, and S590. A disordered region spans residues R571 to S619. Residues S609–S619 show a composition bias toward low complexity. The residue at position 612 (T612) is a Phosphothreonine.

It belongs to the kinesin light chain family. Oligomeric complex composed of two heavy chains and two light chains.

Its subcellular location is the cytoplasm. It localises to the cytoskeleton. In terms of biological role, kinesin is a microtubule-associated force-producing protein that may play a role in organelle transport. The light chain may function in coupling of cargo to the heavy chain or in the modulation of its ATPase activity. This chain is Kinesin light chain 4 (Klc4), found in Mus musculus (Mouse).